The sequence spans 253 residues: 4-hydroxy-tetrahydrodipicolinate reductase (253 aa).

NAD(+)-binding positions include 8–13 (GAKGRM), D34, 76–78 (GTT), and 108–111 (APNF). The active-site Proton donor/acceptor is the H138. A (S)-2,3,4,5-tetrahydrodipicolinate-binding site is contributed by H139. K142 functions as the Proton donor in the catalytic mechanism. (S)-2,3,4,5-tetrahydrodipicolinate is bound at residue 148-149 (GT).

The protein belongs to the DapB family.

Its subcellular location is the cytoplasm. The catalysed reaction is (S)-2,3,4,5-tetrahydrodipicolinate + NAD(+) + H2O = (2S,4S)-4-hydroxy-2,3,4,5-tetrahydrodipicolinate + NADH + H(+). The enzyme catalyses (S)-2,3,4,5-tetrahydrodipicolinate + NADP(+) + H2O = (2S,4S)-4-hydroxy-2,3,4,5-tetrahydrodipicolinate + NADPH + H(+). It functions in the pathway amino-acid biosynthesis; L-lysine biosynthesis via DAP pathway; (S)-tetrahydrodipicolinate from L-aspartate: step 4/4. Catalyzes the conversion of 4-hydroxy-tetrahydrodipicolinate (HTPA) to tetrahydrodipicolinate. The chain is 4-hydroxy-tetrahydrodipicolinate reductase from Bifidobacterium animalis subsp. lactis (strain AD011).